The following is a 133-amino-acid chain: Small ribosomal subunit protein uS11 (133 aa).

The protein belongs to the universal ribosomal protein uS11 family. In terms of assembly, part of the 30S ribosomal subunit. Interacts with proteins S7 and S18. Binds to IF-3.

Its function is as follows. Located on the platform of the 30S subunit, it bridges several disparate RNA helices of the 16S rRNA. Forms part of the Shine-Dalgarno cleft in the 70S ribosome. In Bordetella avium (strain 197N), this protein is Small ribosomal subunit protein uS11.